The chain runs to 274 residues: MQKVVKLNNIKIGNDLPFVLITGPCQIEGKDHALFMAEKLVKLTSKLEIPFIYKSSFDKANRTSVHGIRGVGIEKGLDILSKVKSEFDCPIVTDVHSESQCIETAEVADILQIPAFLCRQTDLLQAAAKTGKIVKVKKGQFLAPWDMKNVQTKLETFGVKDILFTERGACFGYNNLVSDMRSLAIMAELNVPVVFDATHSVQQPGGLGGSTGGERKYVELLAKAATSVGIAGMYMEVHQDPDNAPSDGPCMMKLDNLESILIKLKKYDKITKEK.

It belongs to the KdsA family.

Its subcellular location is the cytoplasm. It catalyses the reaction D-arabinose 5-phosphate + phosphoenolpyruvate + H2O = 3-deoxy-alpha-D-manno-2-octulosonate-8-phosphate + phosphate. It participates in carbohydrate biosynthesis; 3-deoxy-D-manno-octulosonate biosynthesis; 3-deoxy-D-manno-octulosonate from D-ribulose 5-phosphate: step 2/3. The protein operates within bacterial outer membrane biogenesis; lipopolysaccharide biosynthesis. The chain is 2-dehydro-3-deoxyphosphooctonate aldolase from Rickettsia peacockii (strain Rustic).